The sequence spans 174 residues: Xanthine-guanine phosphoribosyltransferase (174 aa).

5-phospho-alpha-D-ribose 1-diphosphate-binding positions include 49-50 (RG) and 108-116 (DDLVDTGAT). Mg(2+) is bound at residue D109. 2 residues coordinate guanine: D112 and I155. D112 and I155 together coordinate xanthine. Residues 112 to 116 (DTGAT) and 154 to 155 (WI) each bind GMP.

This sequence belongs to the purine/pyrimidine phosphoribosyltransferase family. XGPT subfamily. In terms of assembly, homotetramer. Requires Mg(2+) as cofactor.

Its subcellular location is the cell inner membrane. The catalysed reaction is GMP + diphosphate = guanine + 5-phospho-alpha-D-ribose 1-diphosphate. The enzyme catalyses XMP + diphosphate = xanthine + 5-phospho-alpha-D-ribose 1-diphosphate. It catalyses the reaction IMP + diphosphate = hypoxanthine + 5-phospho-alpha-D-ribose 1-diphosphate. Its pathway is purine metabolism; GMP biosynthesis via salvage pathway; GMP from guanine: step 1/1. It functions in the pathway purine metabolism; XMP biosynthesis via salvage pathway; XMP from xanthine: step 1/1. Its function is as follows. Purine salvage pathway enzyme that catalyzes the transfer of the ribosyl-5-phosphate group from 5-phospho-alpha-D-ribose 1-diphosphate (PRPP) to the N9 position of the 6-oxopurines guanine and xanthine to form the corresponding ribonucleotides GMP (guanosine 5'-monophosphate) and XMP (xanthosine 5'-monophosphate), with the release of PPi. To a lesser extent, also acts on hypoxanthine. This is Xanthine-guanine phosphoribosyltransferase from Rhodopseudomonas palustris (strain BisB18).